The chain runs to 232 residues: Clarin-1 (232 aa).

A helical transmembrane segment spans residues 8–28; sequence IIFCMAGVFSFACALGVVTAL. N-linked (GlcNAc...) asparagine glycosylation is present at asparagine 48. 3 consecutive transmembrane segments (helical) span residues 101 to 121, 135 to 155, and 186 to 206; these read VILF…FFMY, LGLY…MILF, and TTSF…GLLI.

The protein belongs to the clarin family. As to expression, widely expressed. Found in the retina.

It localises to the cell membrane. May have a role in the excitatory ribbon synapse junctions between hair cells and cochlear ganglion cells and presumably also in analogous synapses within the retina. The sequence is that of Clarin-1 (CLRN1) from Homo sapiens (Human).